Reading from the N-terminus, the 434-residue chain is Probable G-protein coupled receptor 150 (434 aa).

Residues 1-3 (MED) lie on the Extracellular side of the membrane. Residues 4–24 (LFSPSILPPAPNISVPILLGW) traverse the membrane as a helical segment. At 25-43 (GLNLTLGQGAPASGPPSRR) the chain is on the cytoplasmic side. Residues 44-64 (VRLVFLGVILVVAVAGNTTVL) form a helical membrane-spanning segment. Residues 65–81 (CRLCGGGGPWAGPKRRK) lie on the Extracellular side of the membrane. Residues 82–102 (MDFLLVQLALADLYACGGTAL) traverse the membrane as a helical segment. The Cytoplasmic portion of the chain corresponds to 103–162 (SQLAWELLGEPRAATGDLACRFLQLLQASGRGASAHLVVLIALERRRAVRLPHGRPLPAR). A helical membrane pass occupies residues 163–183 (ALAALGWLLALLLALPPAFVV). The Extracellular segment spans residues 184-237 (RGDSPSPLPPPPPPTSLQPGAPPAARAWPGERRCHGIFAPLPRWHLQVYAFYEA). Residues 188 to 210 (PSPLPPPPPPTSLQPGAPPAARA) form a disordered region. Over residues 189–205 (SPLPPPPPPTSLQPGAP) the composition is skewed to pro residues. A helical transmembrane segment spans residues 238–258 (VAGFVAPVTVLGVACGHLLSV). Over 259-293 (WWRHRPQAPAAAAPWSASPGRAPAPSALPRAKVQS) the chain is Cytoplasmic. A helical transmembrane segment spans residues 294–314 (LKMSLLLALLFVGCELPYFAA). The Extracellular portion of the chain corresponds to 315 to 334 (RLAAAWSSGPAGDWEGEGLS). A helical transmembrane segment spans residues 335 to 355 (AALRVVAMANSALNPFVYLFF). Residues 356-434 (QAGDCRLRRQ…PLPCSCESAF (79 aa)) are Cytoplasmic-facing. Over residues 398–407 (WPHPHYHHAR) the composition is skewed to basic residues. The segment at 398 to 434 (WPHPHYHHARREPLDEGGLRPPPPRPRPLPCSCESAF) is disordered. Residues 417 to 426 (RPPPPRPRPL) show a composition bias toward pro residues.

It belongs to the G-protein coupled receptor 1 family.

It is found in the cell membrane. Orphan receptor. The chain is Probable G-protein coupled receptor 150 (GPR150) from Homo sapiens (Human).